Here is a 2238-residue protein sequence, read N- to C-terminus: Protein Ycf2 (2238 aa).

1579-1586 (GSIGTGRS) is an ATP binding site.

Belongs to the Ycf2 family.

The protein resides in the plastid. Probable ATPase of unknown function. Its presence in a non-photosynthetic plant (Epifagus virginiana) and experiments in tobacco indicate that it has an essential function which is probably not related to photosynthesis. This chain is Protein Ycf2, found in Cuscuta exaltata (Tall dodder).